Here is a 100-residue protein sequence, read N- to C-terminus: uncharacterized protein (100 aa).

Residues 65-96 (PELSKNWEKLKKEIEQKHKEIQELISEFDNMF) are a coiled coil.

This is an uncharacterized protein from Acidianus filamentous virus 2 (isolate Italy/Pozzuoli) (AFV-2).